Here is a 303-residue protein sequence, read N- to C-terminus: Glycine--tRNA ligase alpha subunit (303 aa).

It belongs to the class-II aminoacyl-tRNA synthetase family. In terms of assembly, tetramer of two alpha and two beta subunits.

It is found in the cytoplasm. The catalysed reaction is tRNA(Gly) + glycine + ATP = glycyl-tRNA(Gly) + AMP + diphosphate. This is Glycine--tRNA ligase alpha subunit from Enterobacter sp. (strain 638).